Reading from the N-terminus, the 378-residue chain is Coiled-coil domain-containing protein 74A (378 aa).

Disordered stretches follow at residues 1-52, 128-211, and 301-328; these read MSGA…RNLD, GGPS…EEPL, and EGSQ…PKVS. Residues 34–44 show a composition bias toward polar residues; it reads LRPQSPQLRQS. Residues 47–90 adopt a coiled-coil conformation; that stretch reads QKRNLDLEKSLQFLQQQHSEMLAKLHEEIEHLKRENKDLHYKLI. Positions 141–151 are enriched in basic residues; it reads RTHRPGGKRGR. Positions 165–182 are enriched in polar residues; sequence DSLSMSSFQSVKSISNSG. Composition is skewed to basic and acidic residues over residues 194-205 and 314-323; these read QDSKADVSQKAD and SFPRDQEATH.

The sequence is that of Coiled-coil domain-containing protein 74A (CCDC74A) from Homo sapiens (Human).